A 549-amino-acid chain; its full sequence is Nectin-3 (549 aa).

The signal sequence occupies residues 1-57 (MARTPGPAPLCPGGGKAQLSSAFPPAAGLLLPAPTPPPLLLLLIPLLLFSRLCGALA). In terms of domain architecture, Ig-like V-type spans 58–165 (GSIIVEPHVT…GNAQSSTTVT (108 aa)). Residues 58 to 404 (GSIIVEPHVT…ATLKDDTIGT (347 aa)) lie on the Extracellular side of the membrane. N-linked (GlcNAc...) asparagine glycans are attached at residues Asn73, Asn83, Asn125, Asn186, Asn222, and Asn331. A disulfide bridge links Cys78 with Cys148. 2 Ig-like C2-type domains span residues 170 to 258 (PTVS…KDIR) and 269 to 354 (PEVS…KVIY). Cystine bridges form between Cys193–Cys246 and Cys291–Cys338. The helical transmembrane segment at 405-425 (IIASVVGGALFLVLVSILAGV) threads the bilayer. Residues 426-549 (FCYRRRRTFR…SVISRREWYV (124 aa)) lie on the Cytoplasmic side of the membrane.

Belongs to the nectin family. In terms of assembly, cis- and trans-homodimer. Can form trans-heterodimers with NECTIN1, NECTIN2, PVR, IGSF4B/Necl-1 and with IGSF4. Interaction between NECTIN1 and NECTIN3 on the pre- and postsynaptic sites, respectively, initiates the formation of puncta adherentia junctions between axons and dendrites. Interacts (via Cytoplasmic domain) with AFDN, providing a connection with the actin cytoskeleton. Binds with low affinity to TIGIT. Ubiquitous with high expression in testes. Localized in spermatids at Sertoli-spermatid junctions. Expressed in ovarian granulosa cells, but only faintly expressed after ovulation.

It localises to the cell membrane. It is found in the postsynaptic cell membrane. The protein localises to the cell junction. The protein resides in the adherens junction. Cell adhesion molecule that promotes cell-cell adhesion through heterophilic trans-interactions with nectins-like or other nectins, such as trans-interaction with NECTIN2 at Sertoli-spermatid junctions. Trans-interaction with PVR induces activation of CDC42 and RAC small G proteins through common signaling molecules such as SRC and RAP1. Induces endocytosis-mediated down-regulation of PVR from the cell surface, resulting in reduction of cell movement and proliferation. Involved in axon guidance by promoting contacts between the commissural axons and the floor plate cells. Also involved in the formation of cell-cell junctions, including adherens junctions and synapses. Promotes formation of checkerboard-like cellular pattern of hair cells and supporting cells in the auditory epithelium via heterophilic interaction with NECTIN1: NECTIN1 is present in the membrane of hair cells and associates with NECTIN3 on supporting cells, thereby mediating heterotypic adhesion between these two cell types. Plays a role in the morphology of the ciliary body. This chain is Nectin-3, found in Mus musculus (Mouse).